Reading from the N-terminus, the 306-residue chain is D-alanine--D-alanine ligase (306 aa).

The region spanning 101–303 is the ATP-grasp domain; it reads KQVWQGIGLT…FSQLVVKILE (203 aa). ATP is bound at residue 134–189; the sequence is VADLGLPLIVKPSLEGSSVGMTKVNEISELRGALEAAFRYDVDLLVEKWLHGPEYT. Mg(2+) contacts are provided by Asp-257, Glu-270, and Asn-272.

It belongs to the D-alanine--D-alanine ligase family. Mg(2+) serves as cofactor. Mn(2+) is required as a cofactor.

It is found in the cytoplasm. It catalyses the reaction 2 D-alanine + ATP = D-alanyl-D-alanine + ADP + phosphate + H(+). It functions in the pathway cell wall biogenesis; peptidoglycan biosynthesis. In terms of biological role, cell wall formation. The chain is D-alanine--D-alanine ligase from Photorhabdus laumondii subsp. laumondii (strain DSM 15139 / CIP 105565 / TT01) (Photorhabdus luminescens subsp. laumondii).